Consider the following 416-residue polypeptide: Serine/threonine-protein kinase 26 (416 aa).

At Ala-2 the chain carries N-acetylalanine. A Phosphoserine modification is found at Ser-4. The Protein kinase domain occupies Phe-24 to Ile-274. Residues Ile-30–Val-38 and Lys-53 contribute to the ATP site. Catalysis depends on Asp-144, which acts as the Proton acceptor. Thr-178 carries the phosphothreonine; by autocatalysis modification. The tract at residues Ala-296–Glu-343 is disordered. Phosphoserine is present on residues Ser-300, Ser-304, Ser-306, Ser-309, and Ser-325. Phosphothreonine is present on residues Thr-327 and Thr-328. The span at Lys-331–Asn-340 shows a compositional bias: basic and acidic residues.

This sequence belongs to the protein kinase superfamily. STE Ser/Thr protein kinase family. STE20 subfamily. Homodimer. Interacts with PDCD10. Interacts with GOLGA2. Interacts with CTTNBP2NL. Interacts with RIPOR1 (via C-terminus); this interaction occurs in a PDCD10-dependent and Rho-independent manner. Interacts with PDCD10; this interaction is required for the association of STK26 with RIPOR1. Part of the core of STRIPAK complexes composed of PP2A catalytic and scaffolding subunits, the striatins (PP2A regulatory subunits), the striatin-associated proteins MOB4, STRIP1 and STRIP2, PDCD10 and members of the STE20 kinases, such as STK24 and STK26. The cofactor is Mg(2+).

Its subcellular location is the cytoplasm. It is found in the golgi apparatus. It catalyses the reaction L-seryl-[protein] + ATP = O-phospho-L-seryl-[protein] + ADP + H(+). The enzyme catalyses L-threonyl-[protein] + ATP = O-phospho-L-threonyl-[protein] + ADP + H(+). Its activity is regulated as follows. Interaction with Golgi matrix protein GOLGA2 leads to autophosphorylation on Thr-178, possibly as a consequence of stabilization of dimer formation. May also be activated by C-terminal cleavage. In terms of biological role, serine/threonine-protein kinase that acts as a mediator of cell growth. Modulates apoptosis. In association with STK24 negatively regulates Golgi reorientation in polarized cell migration upon RHO activation. Phosphorylates ATG4B at 'Ser-383', thereby increasing autophagic flux. Part of the striatin-interacting phosphatase and kinase (STRIPAK) complexes. STRIPAK complexes have critical roles in protein (de)phosphorylation and are regulators of multiple signaling pathways including Hippo, MAPK, nuclear receptor and cytoskeleton remodeling. Different types of STRIPAK complexes are involved in a variety of biological processes such as cell growth, differentiation, apoptosis, metabolism and immune regulation. This is Serine/threonine-protein kinase 26 from Mus musculus (Mouse).